The chain runs to 994 residues: Regulator of telomere elongation helicase 1 homolog (994 aa).

The region spanning 15-300 is the Helicase ATP-binding domain; it reads PKLSVKFPFE…EETARSEADA (286 aa). An ATP-binding site is contributed by 50–57; that stretch reads SPTGTGKT. Residues cysteine 142, cysteine 160, cysteine 169, and cysteine 208 each coordinate [4Fe-4S] cluster. Residues 251–254 carry the DEAH box motif; it reads DEAH. The disordered stretch occupies residues 876-895; sequence FKIETPGPSTSTLTQKSEPP. Positions 882-892 are enriched in polar residues; the sequence is GPSTSTLTQKS.

It belongs to the helicase family. RAD3/XPD subfamily.

It is found in the nucleus. The enzyme catalyses ATP + H2O = ADP + phosphate + H(+). A probable ATP-dependent DNA helicase implicated in DNA repair and the maintenance of genomic stability. Acts as an anti-recombinase to counteract toxic recombination and limit crossover during meiosis. Regulates meiotic recombination and crossover homeostasis by physically dissociating strand invasion events and thereby promotes noncrossover repair by meiotic synthesis dependent strand annealing (SDSA) as well as disassembly of D loop recombination intermediates. The chain is Regulator of telomere elongation helicase 1 homolog from Caenorhabditis elegans.